Consider the following 500-residue polypeptide: MNAPIPHAVCHLNDMPLANSFASLPPAHYTALMPTPLPAPYLVCASASAAALIGLDFSDIDSAAFIETFTGNRIPDGSRPLSAVYSGHQFGVWAGQLGDGRAILLGDVPAPTMIPSGRLELQLKGAGLTPYSRMGDGRAVLRSSIREFLCSEAMAALGIPTTRALCVTGSDQIVLREQRETAAVATRMAQSFVRFGSFEHWFYNEKHDELKTLADYVIAQFYPQFKTAENPYKALLTEVTLRTAQMIAHWQAVGFMHGVMNTDNMSILGLTLDYGPFGFMEAFNATHICNHTDQQGRYSYARQPQIGEWNCYALGQTLLPLIGDVDETQNALRIYKPAYAEKFAELMRAKLGLQTQQPDDGKLFDALFAVLQGSHADFTLFFRRLGELRIGQAASREALRDLFLDRAAFDDWALQYELRLQLENSDDDARKLAMHAVNPKYVLRNYLAQIAIEKAQNKDFSEVAKLLQVLEKPFDEQPENEKYAALPPDWANDLEVSCSS.

8 residues coordinate ATP: Gly-98, Gly-100, Arg-101, Lys-124, Asp-136, Gly-137, Arg-187, and Arg-194. The active-site Proton acceptor is the Asp-263. Residues Asn-264 and Asp-273 each coordinate Mg(2+). Asp-273 lines the ATP pocket.

This sequence belongs to the SELO family. It depends on Mg(2+) as a cofactor. The cofactor is Mn(2+).

The enzyme catalyses L-seryl-[protein] + ATP = 3-O-(5'-adenylyl)-L-seryl-[protein] + diphosphate. It catalyses the reaction L-threonyl-[protein] + ATP = 3-O-(5'-adenylyl)-L-threonyl-[protein] + diphosphate. It carries out the reaction L-tyrosyl-[protein] + ATP = O-(5'-adenylyl)-L-tyrosyl-[protein] + diphosphate. The catalysed reaction is L-histidyl-[protein] + UTP = N(tele)-(5'-uridylyl)-L-histidyl-[protein] + diphosphate. The enzyme catalyses L-seryl-[protein] + UTP = O-(5'-uridylyl)-L-seryl-[protein] + diphosphate. It catalyses the reaction L-tyrosyl-[protein] + UTP = O-(5'-uridylyl)-L-tyrosyl-[protein] + diphosphate. Functionally, nucleotidyltransferase involved in the post-translational modification of proteins. It can catalyze the addition of adenosine monophosphate (AMP) or uridine monophosphate (UMP) to a protein, resulting in modifications known as AMPylation and UMPylation. In Herminiimonas arsenicoxydans, this protein is Protein nucleotidyltransferase YdiU.